The sequence spans 408 residues: Serine/threonine-protein kinase UCNL (408 aa).

The Protein kinase domain maps to 21–341 (IKALKILGKG…AAEIKELAFF (321 aa)). Residues 27-35 (LGKGATGTV) and K54 contribute to the ATP site. The active-site Proton acceptor is the D152. The region spanning 342-408 (AGVRWDLLTE…CRKNDPFIEF (67 aa)) is the AGC-kinase C-terminal domain.

This sequence belongs to the protein kinase superfamily. AGC Ser/Thr protein kinase family. Expressed in the epidermis and cortex of the transition zone of the root apex. Expressed in rosette leaves, stems, flowers and siliques.

The protein resides in the cytoplasm. It is found in the nucleus. It catalyses the reaction L-seryl-[protein] + ATP = O-phospho-L-seryl-[protein] + ADP + H(+). The catalysed reaction is L-threonyl-[protein] + ATP = O-phospho-L-threonyl-[protein] + ADP + H(+). Regulates planar ovule integument development. This is Serine/threonine-protein kinase UCNL from Arabidopsis thaliana (Mouse-ear cress).